The following is a 145-amino-acid chain: Basic phospholipase A2 cPt10 (145 aa).

Positions methionine 1–alanine 21 are cleaved as a signal peptide. Positions isoleucine 22–leucine 27 are excised as a propeptide. Cystine bridges form between cysteine 38–cysteine 98, cysteine 54–cysteine 144, cysteine 56–cysteine 72, cysteine 71–cysteine 125, cysteine 78–cysteine 118, cysteine 87–cysteine 111, and cysteine 105–cysteine 116. Ca(2+) is bound by residues tyrosine 55, glycine 57, and glycine 59. The active site involves histidine 75. Aspartate 76 contributes to the Ca(2+) binding site. Residue aspartate 119 is part of the active site.

This sequence belongs to the phospholipase A2 family. Group I subfamily. D49 sub-subfamily. It depends on Ca(2+) as a cofactor. Expressed by the venom gland.

The protein resides in the secreted. The enzyme catalyses a 1,2-diacyl-sn-glycero-3-phosphocholine + H2O = a 1-acyl-sn-glycero-3-phosphocholine + a fatty acid + H(+). In terms of biological role, PLA2 catalyzes the calcium-dependent hydrolysis of the 2-acyl groups in 3-sn-phosphoglycerides. This chain is Basic phospholipase A2 cPt10, found in Laticauda semifasciata (Black-banded sea krait).